The following is a 187-amino-acid chain: Peptidyl-tRNA hydrolase (187 aa).

H14 is a binding site for tRNA. Residue H19 is the Proton acceptor of the active site. Residues Y62, N64, and N110 each contribute to the tRNA site.

The protein belongs to the PTH family. In terms of assembly, monomer.

The protein localises to the cytoplasm. It catalyses the reaction an N-acyl-L-alpha-aminoacyl-tRNA + H2O = an N-acyl-L-amino acid + a tRNA + H(+). Hydrolyzes ribosome-free peptidyl-tRNAs (with 1 or more amino acids incorporated), which drop off the ribosome during protein synthesis, or as a result of ribosome stalling. Functionally, catalyzes the release of premature peptidyl moieties from peptidyl-tRNA molecules trapped in stalled 50S ribosomal subunits, and thus maintains levels of free tRNAs and 50S ribosomes. In Chlorobaculum tepidum (strain ATCC 49652 / DSM 12025 / NBRC 103806 / TLS) (Chlorobium tepidum), this protein is Peptidyl-tRNA hydrolase.